The primary structure comprises 156 residues: uncharacterized protein (156 aa).

5 consecutive transmembrane segments (helical) span residues alanine 7 to leucine 29, tyrosine 42 to phenylalanine 64, alanine 69 to serine 88, alanine 98 to leucine 120, and alanine 133 to isoleucine 155.

It localises to the cell membrane. This is an uncharacterized protein from Pasteurella multocida (strain Pm70).